The following is a 373-amino-acid chain: Queuine tRNA-ribosyltransferase (373 aa).

D91 (proton acceptor) is an active-site residue. Residues 91-95, D145, Q187, and G214 contribute to the substrate site; that span reads DSGGF. Residues 245–251 form an RNA binding region; the sequence is GVGKPED. The active-site Nucleophile is D264. Residues 269 to 273 are RNA binding; important for wobble base 34 recognition; sequence TRNAR. The Zn(2+) site is built by C302, C304, C307, and H333.

It belongs to the queuine tRNA-ribosyltransferase family. As to quaternary structure, homodimer. Within each dimer, one monomer is responsible for RNA recognition and catalysis, while the other monomer binds to the replacement base PreQ1. Requires Zn(2+) as cofactor.

The enzyme catalyses 7-aminomethyl-7-carbaguanine + guanosine(34) in tRNA = 7-aminomethyl-7-carbaguanosine(34) in tRNA + guanine. Its pathway is tRNA modification; tRNA-queuosine biosynthesis. Its function is as follows. Catalyzes the base-exchange of a guanine (G) residue with the queuine precursor 7-aminomethyl-7-deazaguanine (PreQ1) at position 34 (anticodon wobble position) in tRNAs with GU(N) anticodons (tRNA-Asp, -Asn, -His and -Tyr). Catalysis occurs through a double-displacement mechanism. The nucleophile active site attacks the C1' of nucleotide 34 to detach the guanine base from the RNA, forming a covalent enzyme-RNA intermediate. The proton acceptor active site deprotonates the incoming PreQ1, allowing a nucleophilic attack on the C1' of the ribose to form the product. After dissociation, two additional enzymatic reactions on the tRNA convert PreQ1 to queuine (Q), resulting in the hypermodified nucleoside queuosine (7-(((4,5-cis-dihydroxy-2-cyclopenten-1-yl)amino)methyl)-7-deazaguanosine). The chain is Queuine tRNA-ribosyltransferase from Idiomarina loihiensis (strain ATCC BAA-735 / DSM 15497 / L2-TR).